The primary structure comprises 227 residues: Phosphoribosylformylglycinamidine synthase subunit PurQ (227 aa).

The 225-residue stretch at 3-227 (SSVITFPGSN…FFQNLINNLK (225 aa)) folds into the Glutamine amidotransferase type-1 domain. The active-site Nucleophile is C85. Catalysis depends on residues H201 and E203.

Part of the FGAM synthase complex composed of 1 PurL, 1 PurQ and 2 PurS subunits.

The protein localises to the cytoplasm. The catalysed reaction is N(2)-formyl-N(1)-(5-phospho-beta-D-ribosyl)glycinamide + L-glutamine + ATP + H2O = 2-formamido-N(1)-(5-O-phospho-beta-D-ribosyl)acetamidine + L-glutamate + ADP + phosphate + H(+). The enzyme catalyses L-glutamine + H2O = L-glutamate + NH4(+). It functions in the pathway purine metabolism; IMP biosynthesis via de novo pathway; 5-amino-1-(5-phospho-D-ribosyl)imidazole from N(2)-formyl-N(1)-(5-phospho-D-ribosyl)glycinamide: step 1/2. Part of the phosphoribosylformylglycinamidine synthase complex involved in the purines biosynthetic pathway. Catalyzes the ATP-dependent conversion of formylglycinamide ribonucleotide (FGAR) and glutamine to yield formylglycinamidine ribonucleotide (FGAM) and glutamate. The FGAM synthase complex is composed of three subunits. PurQ produces an ammonia molecule by converting glutamine to glutamate. PurL transfers the ammonia molecule to FGAR to form FGAM in an ATP-dependent manner. PurS interacts with PurQ and PurL and is thought to assist in the transfer of the ammonia molecule from PurQ to PurL. This chain is Phosphoribosylformylglycinamidine synthase subunit PurQ, found in Pelagibacter ubique (strain HTCC1062).